Reading from the N-terminus, the 376-residue chain is Glutamate 5-kinase (376 aa).

Lysine 10 is an ATP binding site. The substrate site is built by serine 50, aspartate 137, and asparagine 149. 169-170 provides a ligand contact to ATP; it reads TD. The PUA domain occupies 275 to 353; that stretch reads RGRLVLDAGA…AEIAGVLGFM (79 aa).

It belongs to the glutamate 5-kinase family.

It is found in the cytoplasm. It catalyses the reaction L-glutamate + ATP = L-glutamyl 5-phosphate + ADP. It participates in amino-acid biosynthesis; L-proline biosynthesis; L-glutamate 5-semialdehyde from L-glutamate: step 1/2. In terms of biological role, catalyzes the transfer of a phosphate group to glutamate to form L-glutamate 5-phosphate. The polypeptide is Glutamate 5-kinase (Alcanivorax borkumensis (strain ATCC 700651 / DSM 11573 / NCIMB 13689 / SK2)).